The sequence spans 177 residues: Probable chemoreceptor glutamine deamidase CheD (177 aa).

This sequence belongs to the CheD family.

The catalysed reaction is L-glutaminyl-[protein] + H2O = L-glutamyl-[protein] + NH4(+). Probably deamidates glutamine residues to glutamate on methyl-accepting chemotaxis receptors (MCPs), playing an important role in chemotaxis. The polypeptide is Probable chemoreceptor glutamine deamidase CheD (Pseudomonas savastanoi pv. phaseolicola (strain 1448A / Race 6) (Pseudomonas syringae pv. phaseolicola (strain 1448A / Race 6))).